Reading from the N-terminus, the 543-residue chain is Serine/threonine-protein kinase Chk2 (543 aa).

A disordered region spans residues 1 to 66 (MSRESDVEAQ…SGTLSSLETV (66 aa)). Over residues 8-22 (EAQQSHGSSACSQPH) the composition is skewed to polar residues. Positions 23-62 (GSVTQSQGSSSQSQGISSSSTSTMPNSSQSSHSSSGTLSS) are enriched in low complexity. Ser62 bears the Phosphoserine; by PLK3 mark. The residue at position 68 (Thr68) is a Phosphothreonine; by ATM and MAP3K20. A Phosphoserine; by PLK3 modification is found at Ser73. The FHA domain occupies 113–175 (YWFGRDKSCE…NGTFVNTELV (63 aa)). Residues 220 to 486 (YIMSKTLGSG…TEEALRHPWL (267 aa)) enclose the Protein kinase domain. Residues 227 to 234 (GSGACGEV), Lys249, and 302 to 308 (ELMEGGE) each bind ATP. Asp347 (proton acceptor) is an active-site residue. ATP contacts are provided by residues 351–352 (EN) and Asp368. The T-loop/activation segment stretch occupies residues 368–394 (DFGHSKILGETSLMRTLCGTPTYLAPE). Position 379 is a phosphoserine; by autocatalysis (Ser379). Thr383 and Thr387 each carry phosphothreonine; by autocatalysis. Phosphoserine is present on Ser456. The span at 506–517 (TALPQVLAQPST) shows a compositional bias: polar residues. The segment at 506 to 538 (TALPQVLAQPSTSRKRPREGEAEGAETTKRPAV) is disordered. Basic and acidic residues predominate over residues 523–534 (REGEAEGAETTK).

This sequence belongs to the protein kinase superfamily. CAMK Ser/Thr protein kinase family. CHK2 subfamily. Homodimer. Homodimerization is part of the activation process but the dimer may dissociate following activation. Interacts with PML. Interacts with TP53. Interacts with RB1; phosphorylates RB1. Interacts with BRCA1. Interacts (phosphorylated at Thr-68) with MDC1; requires ATM-mediated phosphorylation of CHEK2. Interacts with TP53BP1; modulates CHEK2 phosphorylation at Thr-68 in response to ionizing radiation. Interacts with CDC25A; phosphorylates CDC25A and mediates its degradation in response to ionizing radiation. Interacts with CUL1; mediates CHEK2 ubiquitination and regulation. Interacts with CDKN2AIP. Interacts (via protein kinase domain) with CCAR2 (via N-terminus). Interacts with SIRT1. It depends on Mg(2+) as a cofactor. Phosphorylated. Phosphorylated at Ser-73 by PLK3 in response to DNA damage, promoting phosphorylation at Thr-68 by ATM and the G2/M transition checkpoint. Phosphorylation at Thr-68 induces homodimerization. Autophosphorylates at Thr-383 and Thr-387 in the T-loop/activation segment upon dimerization to become fully active and phosphorylate its substrates like for instance CDC25C. DNA damage-induced autophosphorylation at Ser-379 induces CUL1-mediated ubiquitination and regulates the pro-apoptotic function. Phosphorylation at Ser-456 also regulates ubiquitination. Phosphorylated by PLK4. Post-translationally, ubiquitinated. CUL1-mediated ubiquitination regulates the pro-apoptotic function. Ubiquitination may also regulate protein stability. Ubiquitinated by RNF8 via 'Lys-48'-linked ubiquitination. In terms of tissue distribution, high expression is found in testis, spleen, colon and peripheral blood leukocytes. Low expression is found in other tissues.

The protein resides in the nucleus. Its subcellular location is the PML body. It localises to the nucleoplasm. The catalysed reaction is L-seryl-[protein] + ATP = O-phospho-L-seryl-[protein] + ADP + H(+). The enzyme catalyses L-threonyl-[protein] + ATP = O-phospho-L-threonyl-[protein] + ADP + H(+). Its activity is regulated as follows. Activated through phosphorylation at Thr-68 by ATM in response to DNA double-strand breaks. Activation is modulated by several mediators including MDC1 and TP53BP1. Induces homodimerization with exchange of the T-loop/activation segment between protomers and transphosphorylation of the protomers. The autophosphorylated kinase dimer is fully active. Negatively regulated by PPM1D through dephosphorylation of Thr-68. In terms of biological role, serine/threonine-protein kinase which is required for checkpoint-mediated cell cycle arrest, activation of DNA repair and apoptosis in response to the presence of DNA double-strand breaks. May also negatively regulate cell cycle progression during unperturbed cell cycles. Following activation, phosphorylates numerous effectors preferentially at the consensus sequence [L-X-R-X-X-S/T]. Regulates cell cycle checkpoint arrest through phosphorylation of CDC25A, CDC25B and CDC25C, inhibiting their activity. Inhibition of CDC25 phosphatase activity leads to increased inhibitory tyrosine phosphorylation of CDK-cyclin complexes and blocks cell cycle progression. May also phosphorylate NEK6 which is involved in G2/M cell cycle arrest. Regulates DNA repair through phosphorylation of BRCA2, enhancing the association of RAD51 with chromatin which promotes DNA repair by homologous recombination. Also stimulates the transcription of genes involved in DNA repair (including BRCA2) through the phosphorylation and activation of the transcription factor FOXM1. Regulates apoptosis through the phosphorylation of p53/TP53, MDM4 and PML. Phosphorylation of p53/TP53 at 'Ser-20' by CHEK2 may alleviate inhibition by MDM2, leading to accumulation of active p53/TP53. Phosphorylation of MDM4 may also reduce degradation of p53/TP53. Also controls the transcription of pro-apoptotic genes through phosphorylation of the transcription factor E2F1. Tumor suppressor, it may also have a DNA damage-independent function in mitotic spindle assembly by phosphorylating BRCA1. Its absence may be a cause of the chromosomal instability observed in some cancer cells. Promotes the CCAR2-SIRT1 association and is required for CCAR2-mediated SIRT1 inhibition. Under oxidative stress, promotes ATG7 ubiquitination by phosphorylating the E3 ubiquitin ligase TRIM32 at 'Ser-55' leading to positive regulation of the autophagosme assembly. (Microbial infection) Phosphorylates herpes simplex virus 1/HHV-1 protein ICP0 and thus activates its SUMO-targeted ubiquitin ligase activity. The sequence is that of Serine/threonine-protein kinase Chk2 from Homo sapiens (Human).